The chain runs to 521 residues: Tigger transposable element-derived protein 6 (521 aa).

Positions 3-54 constitute an HTH psq-type domain; the sequence is NKGNKKRRQFSLEEKMKVVGAVDSGKRKGDVAKEFGITPSTLSTFLKDRTKF. DNA-binding regions (H-T-H motif) lie at residues 30–50 and 99–130; these read KGDV…FLKD and SVIR…FRDR. The 72-residue stretch at 66–137 folds into the HTH CENPB-type domain; that stretch reads QRKRMRSALY…RDRHGIALKA (72 aa). Residues 170 to 372 enclose the DDE-1 domain; that stretch reads YSPDDIFNAD…VKPSTVVKCW (203 aa).

Belongs to the tigger transposable element derived protein family.

The protein localises to the nucleus. This chain is Tigger transposable element-derived protein 6 (TIGD6), found in Homo sapiens (Human).